Here is a 124-residue protein sequence, read N- to C-terminus: Fluoride-specific ion channel FluC (124 aa).

The next 4 membrane-spanning stretches (helical) occupy residues 6 to 26 (FAVACGGVIGTLLRFALATWV), 34 to 54 (FYLATVAVNLLGCLLIGYLYA), 69 to 89 (ALIIGFLGALTTFSSFSLDAL), and 101 to 121 (FAYVGGSVLGGLLAAWAGLAL). Residues Gly76 and Thr79 each coordinate Na(+).

The protein belongs to the fluoride channel Fluc/FEX (TC 1.A.43) family.

It is found in the cell inner membrane. It catalyses the reaction fluoride(in) = fluoride(out). Na(+) is not transported, but it plays an essential structural role and its presence is essential for fluoride channel function. Fluoride-specific ion channel. Important for reducing fluoride concentration in the cell, thus reducing its toxicity. The polypeptide is Fluoride-specific ion channel FluC (Stutzerimonas stutzeri (strain A1501) (Pseudomonas stutzeri)).